The following is a 467-amino-acid chain: ATP synthase subunit beta (467 aa).

152-159 (GGAGVGKT) is an ATP binding site.

This sequence belongs to the ATPase alpha/beta chains family. F-type ATPases have 2 components, CF(1) - the catalytic core - and CF(0) - the membrane proton channel. CF(1) has five subunits: alpha(3), beta(3), gamma(1), delta(1), epsilon(1). CF(0) has three main subunits: a(1), b(2) and c(9-12). The alpha and beta chains form an alternating ring which encloses part of the gamma chain. CF(1) is attached to CF(0) by a central stalk formed by the gamma and epsilon chains, while a peripheral stalk is formed by the delta and b chains.

Its subcellular location is the cell inner membrane. The catalysed reaction is ATP + H2O + 4 H(+)(in) = ADP + phosphate + 5 H(+)(out). Functionally, produces ATP from ADP in the presence of a proton gradient across the membrane. The catalytic sites are hosted primarily by the beta subunits. The protein is ATP synthase subunit beta of Wolinella succinogenes (strain ATCC 29543 / DSM 1740 / CCUG 13145 / JCM 31913 / LMG 7466 / NCTC 11488 / FDC 602W) (Vibrio succinogenes).